The following is a 196-amino-acid chain: MPLRPIIILPDKRLRLVARPVASVDSEVRALMDDMLETMYEAPGIGLAATQIAVDRRVIVLDVAKRRDDSAKADPICLANPEILWASEELSSYEEGCLSIPEFYEEVFRPEKVRVGYLDRDGRRREIEADGLLATCLQHEIDHLNGVLFIDHISRLKRARIIKKFEKAAKLDAQEPKRAPHSPHTDAQKPGAASDL.

Residues C97 and H139 each coordinate Fe cation. E140 is an active-site residue. Residue H143 coordinates Fe cation. Residues 171-187 (LDAQEPKRAPHSPHTDA) are compositionally biased toward basic and acidic residues. Residues 171–196 (LDAQEPKRAPHSPHTDAQKPGAASDL) form a disordered region.

It belongs to the polypeptide deformylase family. It depends on Fe(2+) as a cofactor.

The catalysed reaction is N-terminal N-formyl-L-methionyl-[peptide] + H2O = N-terminal L-methionyl-[peptide] + formate. Removes the formyl group from the N-terminal Met of newly synthesized proteins. Requires at least a dipeptide for an efficient rate of reaction. N-terminal L-methionine is a prerequisite for activity but the enzyme has broad specificity at other positions. The chain is Peptide deformylase from Methylocella silvestris (strain DSM 15510 / CIP 108128 / LMG 27833 / NCIMB 13906 / BL2).